Here is an 89-residue protein sequence, read N- to C-terminus: Small ribosomal subunit protein uS14A (89 aa).

This sequence belongs to the universal ribosomal protein uS14 family. Part of the 30S ribosomal subunit. Contacts proteins S3 and S10.

Its function is as follows. Binds 16S rRNA, required for the assembly of 30S particles and may also be responsible for determining the conformation of the 16S rRNA at the A site. In Limosilactobacillus reuteri (strain DSM 20016) (Lactobacillus reuteri), this protein is Small ribosomal subunit protein uS14A.